A 145-amino-acid polypeptide reads, in one-letter code: Peptide methionine sulfoxide reductase MsrB (145 aa).

In terms of domain architecture, MsrB spans 4 to 127; sequence SDELKQRIGD…NSAALKFIPY (124 aa). Catalysis depends on Cys116, which acts as the Nucleophile.

Belongs to the MsrB Met sulfoxide reductase family.

It carries out the reaction L-methionyl-[protein] + [thioredoxin]-disulfide + H2O = L-methionyl-(R)-S-oxide-[protein] + [thioredoxin]-dithiol. This is Peptide methionine sulfoxide reductase MsrB from Streptococcus pyogenes serotype M18 (strain MGAS8232).